The chain runs to 335 residues: Transcriptional activator NphR (335 aa).

Positions 231-329 (TRVQRVIEQN…GSSPGLYRKE (99 aa)) constitute an HTH araC/xylS-type domain. 2 consecutive DNA-binding regions (H-T-H motif) follow at residues 249-270 (SDIA…NAEG) and 296-319 (VADV…RSTF).

In terms of biological role, transcriptional activator of nphA1 and nphA2 involved in the degradation of 4-nitrophenol (4-NP). In Rhodococcus sp, this protein is Transcriptional activator NphR (nphR).